Here is a 310-residue protein sequence, read N- to C-terminus: Acetylglutamate kinase (310 aa).

Substrate contacts are provided by residues 83–84 (GG), arginine 105, and asparagine 207.

This sequence belongs to the acetylglutamate kinase family. ArgB subfamily.

Its subcellular location is the cytoplasm. It catalyses the reaction N-acetyl-L-glutamate + ATP = N-acetyl-L-glutamyl 5-phosphate + ADP. The protein operates within amino-acid biosynthesis; L-arginine biosynthesis; N(2)-acetyl-L-ornithine from L-glutamate: step 2/4. Catalyzes the ATP-dependent phosphorylation of N-acetyl-L-glutamate. The chain is Acetylglutamate kinase from Ralstonia nicotianae (strain ATCC BAA-1114 / GMI1000) (Ralstonia solanacearum).